We begin with the raw amino-acid sequence, 122 residues long: MIQPQTHLNVADNSGARELMCIRIIGASNRRYAHIGDVIVAVIKEAVPNMPLERSEVVRAVIVRTCKELKRDNGMIIRYDDNAAVVIDQEGNPKGTRIFGAIARELRELNFTKIVSLAPEVL.

Belongs to the universal ribosomal protein uL14 family. Part of the 50S ribosomal subunit.

It localises to the plastid. Its subcellular location is the chloroplast. Functionally, binds to 23S rRNA. This is Large ribosomal subunit protein uL14c from Nicotiana sylvestris (Wood tobacco).